We begin with the raw amino-acid sequence, 320 residues long: uncharacterized protein (320 aa).

The protein belongs to the anthranilate phosphoribosyltransferase family.

This is an uncharacterized protein from Escherichia coli (strain K12).